A 158-amino-acid polypeptide reads, in one-letter code: MATEKTYPMTQEGKQKLENELEDLKTVKRKEVVERIKIARSFGDLSENSEYDAAKDEQAFVEGRITQLENMIRNAVIITDNGEESTVVTLGKTVTFKELPDGDEEAYTIVGSAEADPFEGRISNDSPIAKSLLGKQIGEKVAIQTPGGEMQVEIISVK.

A coiled-coil region spans residues 4–75; sequence EKTYPMTQEG…TQLENMIRNA (72 aa).

The protein belongs to the GreA/GreB family.

Functionally, necessary for efficient RNA polymerase transcription elongation past template-encoded arresting sites. The arresting sites in DNA have the property of trapping a certain fraction of elongating RNA polymerases that pass through, resulting in locked ternary complexes. Cleavage of the nascent transcript by cleavage factors such as GreA or GreB allows the resumption of elongation from the new 3'terminus. GreA releases sequences of 2 to 3 nucleotides. This Bacillus cereus (strain ATCC 10987 / NRS 248) protein is Transcription elongation factor GreA.